The primary structure comprises 569 residues: TBCC domain-containing protein 1 (569 aa).

Residues proline 304–leucine 435 enclose the C-CAP/cofactor C-like domain.

It belongs to the TBCC family.

It localises to the cytoplasm. The protein resides in the cytoskeleton. The protein localises to the microtubule organizing center. It is found in the centrosome. Its subcellular location is the spindle pole. Plays a role in the regulation of centrosome and Golgi apparatus positioning, with consequences on cell shape and cell migration. The sequence is that of TBCC domain-containing protein 1 (Tbccd1) from Rattus norvegicus (Rat).